We begin with the raw amino-acid sequence, 209 residues long: Large ribosomal subunit protein uL3 (209 aa).

The disordered stretch occupies residues 127–152; it reads SGGPSSHGSKFHRHLGSTGQAATPSR. Over residues 143–152 the composition is skewed to polar residues; sequence STGQAATPSR.

Belongs to the universal ribosomal protein uL3 family. Part of the 50S ribosomal subunit. Forms a cluster with proteins L14 and L19.

One of the primary rRNA binding proteins, it binds directly near the 3'-end of the 23S rRNA, where it nucleates assembly of the 50S subunit. This is Large ribosomal subunit protein uL3 from Borrelia hermsii (strain HS1 / DAH).